The chain runs to 135 residues: Transcription antitermination protein NusB (135 aa).

The tract at residues 115 to 135 is disordered; the sequence is ATPAESTGRGSAVDSIPGQPS.

It belongs to the NusB family.

Its function is as follows. Involved in transcription antitermination. Required for transcription of ribosomal RNA (rRNA) genes. Binds specifically to the boxA antiterminator sequence of the ribosomal RNA (rrn) operons. The polypeptide is Transcription antitermination protein NusB (Frankia casuarinae (strain DSM 45818 / CECT 9043 / HFP020203 / CcI3)).